The sequence spans 148 residues: Aspartate carbamoyltransferase regulatory chain (148 aa).

The Zn(2+) site is built by Cys-106, Cys-111, Cys-134, and Cys-137.

It belongs to the PyrI family. As to quaternary structure, contains catalytic and regulatory chains. Requires Zn(2+) as cofactor.

Involved in allosteric regulation of aspartate carbamoyltransferase. In Methanococcus maripaludis (strain C7 / ATCC BAA-1331), this protein is Aspartate carbamoyltransferase regulatory chain.